The primary structure comprises 227 residues: uncharacterized protein (227 aa).

ATP is bound at residue 17–24 (GKTGCGKT).

This is an uncharacterized protein from Methanocaldococcus jannaschii (strain ATCC 43067 / DSM 2661 / JAL-1 / JCM 10045 / NBRC 100440) (Methanococcus jannaschii).